A 32-amino-acid polypeptide reads, in one-letter code: GSPRQCAETCFIGKCYTEELGCTCTAFLCMKN.

The cyclopeptide (Gly-Asn) cross-link spans 1 to 32 (GSPRQCAETCFIGKCYTEELGCTCTAFLCMKN). Intrachain disulfides connect cysteine 6-cysteine 22, cysteine 10-cysteine 24, and cysteine 15-cysteine 29.

It belongs to the cyclotide family. Moebius subfamily. This is a cyclic peptide.

Probably participates in a plant defense mechanism. The protein is Cyclotide Hyfl-C of Hybanthus floribundus (Greenviolet).